Consider the following 255-residue polypeptide: MSISDNSRDQLGELPAGRPLQSDFDNDLDYPRLGSVTFRRGTLTENQQTMWDEKWPELGRVLEDELIDVDAWFGREGAKTIVEIGSGTGTSTAAMAPLEADTNIVAVELYKPGLAKLMGSVVRGEIDNVRMVRGDGIEVLNRMFADGSLDGIRVYFPDPWPKARHNKRRIIQSGPLNLFAKKLKPGGVLHVATDHADYAEWINELVEVEPLLEYKGWPWEECPQLTDRQVITKFEGKGLEKDHVINEYLWQKVQN.

A compositionally biased stretch (basic and acidic residues) spans 1–11 (MSISDNSRDQL). The segment at 1 to 25 (MSISDNSRDQLGELPAGRPLQSDFD) is disordered. Residues Glu83, Glu108, Asp135, and Asp158 each contribute to the S-adenosyl-L-methionine site. The active site involves Asp158. Residue Lys162 participates in substrate binding. The segment at 164-169 (RHNKRR) is interaction with RNA. Residues Asp194 and 232–235 (TKFE) contribute to the substrate site.

Belongs to the class I-like SAM-binding methyltransferase superfamily. TrmB family.

The enzyme catalyses guanosine(46) in tRNA + S-adenosyl-L-methionine = N(7)-methylguanosine(46) in tRNA + S-adenosyl-L-homocysteine. It functions in the pathway tRNA modification; N(7)-methylguanine-tRNA biosynthesis. Functionally, catalyzes the formation of N(7)-methylguanine at position 46 (m7G46) in tRNA. The polypeptide is tRNA (guanine-N(7)-)-methyltransferase (Corynebacterium glutamicum (strain ATCC 13032 / DSM 20300 / JCM 1318 / BCRC 11384 / CCUG 27702 / LMG 3730 / NBRC 12168 / NCIMB 10025 / NRRL B-2784 / 534)).